The chain runs to 46 residues: Myoregulin (46 aa).

Residues 1-21 (MSGKSWVLISTTSPQSLEDEI) lie on the Cytoplasmic side of the membrane. Residues 22-42 (LGRLLKILFVLFVDLMSIMYV) form a helical membrane-spanning segment. Over 43-46 (VITS) the chain is Lumenal.

In terms of assembly, homooligomer. Monomer. Interacts with ATP2A1/SERCA1. Interacts as a monomer with ATP2A2/SERCA2; the interaction inhibits ATP2A2 activity. As to expression, specifically expressed in all skeletal muscles. Detected in both fast- and slow-type skeletal muscle. Not expressed in cardiac or smooth muscles.

The protein localises to the sarcoplasmic reticulum membrane. In terms of biological role, inhibits the activity of ATP2A1/SERCA1 ATPase in sarcoplasmic reticulum by decreasing the apparent affinity of the ATPase for Ca(2+), thereby acting as a key regulator of skeletal muscle activity. Its high expression in adult skeletal muscle, suggests that it constitutes the predominant regulator of ATP2A1/SERCA1 in adult skeletal muscle. Also inhibits the activity of ATP2A2/SERCA2 and ATP2A3/SERCA3. This chain is Myoregulin, found in Mus musculus (Mouse).